The chain runs to 220 residues: Protein-methionine-sulfoxide reductase heme-binding subunit MsrQ (220 aa).

6 helical membrane passes run 20–40 (LWLLYTAGFVPAVWTFYLGAT), 52–72 (EHLLGLWALRFLILTLLVTPI), 86–106 (ALGLLAFYYALMHFTTYMVLD), 122–142 (PFITIGMISLALLVPLALTSN), 153–173 (WSSLHKLVYIAIAGSAVHFLM), and 175–195 (VKSWPAEPVIYAAIVAALLLW).

The protein belongs to the MsrQ family. In terms of assembly, heterodimer of a catalytic subunit (MsrP) and a heme-binding subunit (MsrQ). The cofactor is FMN. Heme b is required as a cofactor.

The protein resides in the cell inner membrane. Its function is as follows. Part of the MsrPQ system that repairs oxidized periplasmic proteins containing methionine sulfoxide residues (Met-O), using respiratory chain electrons. Thus protects these proteins from oxidative-stress damage caused by reactive species of oxygen and chlorine generated by the host defense mechanisms. MsrPQ is essential for the maintenance of envelope integrity under bleach stress, rescuing a wide series of structurally unrelated periplasmic proteins from methionine oxidation. MsrQ provides electrons for reduction to the reductase catalytic subunit MsrP, using the quinone pool of the respiratory chain. The sequence is that of Protein-methionine-sulfoxide reductase heme-binding subunit MsrQ from Brucella abortus (strain S19).